Here is a 461-residue protein sequence, read N- to C-terminus: Proline--tRNA ligase (461 aa).

Belongs to the class-II aminoacyl-tRNA synthetase family. ProS type 3 subfamily. As to quaternary structure, homodimer.

It localises to the cytoplasm. It carries out the reaction tRNA(Pro) + L-proline + ATP = L-prolyl-tRNA(Pro) + AMP + diphosphate. Functionally, catalyzes the attachment of proline to tRNA(Pro) in a two-step reaction: proline is first activated by ATP to form Pro-AMP and then transferred to the acceptor end of tRNA(Pro). This chain is Proline--tRNA ligase, found in Methanococcus vannielii (strain ATCC 35089 / DSM 1224 / JCM 13029 / OCM 148 / SB).